A 132-amino-acid polypeptide reads, in one-letter code: Cytochrome b5 (132 aa).

The Cytochrome b5 heme-binding domain maps to 2 to 78; the sequence is GKIFTLAEVA…LDEYYVGDID (77 aa). Residues histidine 37 and histidine 61 each coordinate heme. The chain crosses the membrane as a helical span at residues 104–124; that stretch reads FVIKLLQFLVPLVILAGAIGI.

This sequence belongs to the cytochrome b5 family.

The protein resides in the endoplasmic reticulum membrane. Its subcellular location is the microsome membrane. Membrane bound hemoprotein which function as an electron carrier for several membrane bound oxygenases. In Borago officinalis (Bourrache), this protein is Cytochrome b5.